The following is a 468-amino-acid chain: Inositol polyphosphate 5-phosphatase K (468 aa).

The interval 34–337 (VHVVTWNVAS…SDHKPVTGTF (304 aa)) is catalytic. Residues 318–448 (NYVSHMAYSI…HSVVGISQPF (131 aa)) are required for interaction with GPR78 and PAK1. Residues 340-468 (ELNPLMSVPL…DTLYEPEPQI (129 aa)) are required for ruffle localization.

It belongs to the inositol 1,4,5-trisphosphate 5-phosphatase type II family. In terms of assembly, interacts with GPR78; necessary for INPP5K localization at the endoplasmic reticulum. Interacts with PAK1; competes with GPR78. As to expression, expressed in the skeletal muscle and the eye.

Its subcellular location is the endoplasmic reticulum. The protein localises to the cytoplasm. It catalyses the reaction 1D-myo-inositol 1,4,5-trisphosphate + H2O = 1D-myo-inositol 1,4-bisphosphate + phosphate. The catalysed reaction is 1,2-dioctanoyl-sn-glycero-3-phospho-(1D-myo-inositol-3,4,5-trisphosphate) + H2O = 1,2-dioctanoyl-sn-glycero-3-phospho-(1D-myo-inositol-3,4-bisphosphate) + phosphate. The enzyme catalyses 1D-myo-inositol 1,3,4,5-tetrakisphosphate + H2O = 1D-myo-inositol 1,3,4-trisphosphate + phosphate. It carries out the reaction a 1,2-diacyl-sn-glycero-3-phospho-(1D-myo-inositol-4,5-bisphosphate) + H2O = a 1,2-diacyl-sn-glycero-3-phospho-(1D-myo-inositol 4-phosphate) + phosphate. It catalyses the reaction a 1,2-diacyl-sn-glycero-3-phospho-(1D-myo-inositol-3,4,5-trisphosphate) + H2O = a 1,2-diacyl-sn-glycero-3-phospho-(1D-myo-inositol-3,4-bisphosphate) + phosphate. Inositol 5-phosphatase which acts on inositol 1,4,5-trisphosphate, inositol 1,3,4,5-tetrakisphosphate, phosphatidylinositol 4,5-bisphosphate and phosphatidylinositol 3,4,5-trisphosphate. Has 6-fold higher affinity for phosphatidylinositol 4,5-bisphosphate than for inositol 1,4,5-trisphosphate. Negatively regulates assembly of the actin cytoskeleton. Controls insulin-dependent glucose uptake among inositol 3,4,5-trisphosphate phosphatases; therefore, is the specific regulator for insulin signaling in skeletal muscle. This chain is Inositol polyphosphate 5-phosphatase K, found in Mus musculus (Mouse).